We begin with the raw amino-acid sequence, 260 residues long: Alpha-acetolactate decarboxylase (260 aa).

Belongs to the alpha-acetolactate decarboxylase family.

It catalyses the reaction (2S)-2-acetolactate + H(+) = (R)-acetoin + CO2. It functions in the pathway polyol metabolism; (R,R)-butane-2,3-diol biosynthesis; (R,R)-butane-2,3-diol from pyruvate: step 2/3. Converts acetolactate into acetoin. The sequence is that of Alpha-acetolactate decarboxylase (budA) from Methylococcus capsulatus (strain ATCC 33009 / NCIMB 11132 / Bath).